The chain runs to 302 residues: Deoxyhypusine hydroxylase (302 aa).

M1 is modified (N-acetylmethionine). 5 HEAT-like PBS-type repeats span residues 54–80 (LKHE…VLQD), 87–113 (VRHE…YSSD), 174–200 (ERYR…GLHC), 205–231 (FRHE…ALAR), and 238–264 (VRHE…HADD). 3 residues coordinate Fe cation: H56, H89, and E90. H207, H240, and E241 together coordinate Fe cation.

This sequence belongs to the deoxyhypusine hydroxylase family. It depends on Fe(2+) as a cofactor.

It catalyses the reaction [eIF5A protein]-deoxyhypusine + AH2 + O2 = [eIF5A protein]-hypusine + A + H2O. Its pathway is protein modification; eIF5A hypusination. Catalyzes the hydroxylation of the N(6)-(4-aminobutyl)-L-lysine intermediate produced by deoxyhypusine synthase/DHPS on a critical lysine of the eukaryotic translation initiation factor 5A/eIF-5A. This is the second step of the post-translational modification of that lysine into an unusual amino acid residue named hypusine. Hypusination is unique to mature eIF-5A factor and is essential for its function. The chain is Deoxyhypusine hydroxylase from Homo sapiens (Human).